The following is a 485-amino-acid chain: uncharacterized protein (485 aa).

The segment at 151-201 (IKAPTNNSQSGDGNGGTNNDNLLGTFDIREKSNGKKGESNGKQGNGQDKKT) is disordered. Residues 155–174 (TNNSQSGDGNGGTNNDNLLG) are compositionally biased toward low complexity. Residues 177-189 (DIREKSNGKKGES) are compositionally biased toward basic and acidic residues.

It belongs to the MG185/MG260 family.

This is an uncharacterized protein from Mycoplasma pneumoniae (strain ATCC 29342 / M129 / Subtype 1) (Mycoplasmoides pneumoniae).